Here is a 165-residue protein sequence, read N- to C-terminus: Sec-independent protein translocase protein TatB (165 aa).

Residues 1-21 (MFDVSFTELIVIGVVALIVLG) form a helical membrane-spanning segment. Residues 67 to 84 (DSTAQDVNQSLRSATDSL) are compositionally biased toward polar residues. Positions 67–165 (DSTAQDVNQS…PKSPSTGNAT (99 aa)) are disordered. Over residues 127-159 (KLPGTPATLPATAAAEPTPAAPAASQAEAPKSP) the composition is skewed to low complexity.

This sequence belongs to the TatB family. In terms of assembly, the Tat system comprises two distinct complexes: a TatABC complex, containing multiple copies of TatA, TatB and TatC subunits, and a separate TatA complex, containing only TatA subunits. Substrates initially bind to the TatABC complex, which probably triggers association of the separate TatA complex to form the active translocon.

The protein resides in the cell inner membrane. Functionally, part of the twin-arginine translocation (Tat) system that transports large folded proteins containing a characteristic twin-arginine motif in their signal peptide across membranes. Together with TatC, TatB is part of a receptor directly interacting with Tat signal peptides. TatB may form an oligomeric binding site that transiently accommodates folded Tat precursor proteins before their translocation. This chain is Sec-independent protein translocase protein TatB, found in Bordetella avium (strain 197N).